A 238-amino-acid polypeptide reads, in one-letter code: ATP synthase subunit a (238 aa).

Transmembrane regions (helical) follow at residues 16–36 (LIWL…TVLF), 79–99 (GLFM…FFPV), 103–123 (FVFG…SSLL), 129–149 (GLMS…MVVV), and 209–229 (VFGA…CVLL).

It belongs to the ATPase A chain family. In terms of assembly, F-type ATPases have 2 components, CF(1) - the catalytic core - and CF(0) - the membrane proton channel. CF(1) has five subunits: alpha(3), beta(3), gamma(1), delta(1), epsilon(1). CF(0) has three main subunits: a, b and c.

The protein resides in the mitochondrion inner membrane. Functionally, mitochondrial membrane ATP synthase (F(1)F(0) ATP synthase or Complex V) produces ATP from ADP in the presence of a proton gradient across the membrane which is generated by electron transport complexes of the respiratory chain. F-type ATPases consist of two structural domains, F(1) - containing the extramembraneous catalytic core and F(0) - containing the membrane proton channel, linked together by a central stalk and a peripheral stalk. During catalysis, ATP synthesis in the catalytic domain of F(1) is coupled via a rotary mechanism of the central stalk subunits to proton translocation. Key component of the proton channel; it may play a direct role in the translocation of protons across the membrane. This Mytilus edulis (Blue mussel) protein is ATP synthase subunit a (ATP6).